A 132-amino-acid polypeptide reads, in one-letter code: Riboflavin kinase (132 aa).

10–15 (GLGEGR) is a CDP binding site. Residues threonine 39 and asparagine 41 each coordinate Mg(2+). FMN-binding residues include threonine 95, tyrosine 96, and glutamate 103. Residue 108-111 (MKLR) coordinates CDP.

As to quaternary structure, monomer. It depends on Mg(2+) as a cofactor.

The enzyme catalyses riboflavin + CTP = CDP + FMN + H(+). It functions in the pathway cofactor biosynthesis; FMN biosynthesis; FMN from riboflavin (CTP route): step 1/1. Functionally, catalyzes the CTP-dependent phosphorylation of riboflavin (vitamin B2) to form flavin mononucleotide (FMN). Can also utilize UTP as the phosphate donor, although less efficiently, and it is unclear if ATP and GTP can also serve as substrates or not. This chain is Riboflavin kinase (ribK), found in Methanocaldococcus jannaschii (strain ATCC 43067 / DSM 2661 / JAL-1 / JCM 10045 / NBRC 100440) (Methanococcus jannaschii).